A 123-amino-acid chain; its full sequence is Large ribosomal subunit protein mL52 (123 aa).

The transit peptide at 1-23 (MAALGTVLFTGVRRLHCSVAAWA) directs the protein to the mitochondrion. Basic and acidic residues predominate over residues 99 to 109 (QEEQRKQENAL). The interval 99 to 123 (QEEQRKQENALKPKGASLKSPLPSQ) is disordered.

This sequence belongs to the mitochondrion-specific ribosomal protein mL52 family. Component of the mitochondrial large ribosomal subunit (mt-LSU). Mature mammalian 55S mitochondrial ribosomes consist of a small (28S) and a large (39S) subunit. The 28S small subunit contains a 12S ribosomal RNA (12S mt-rRNA) and 30 different proteins. The 39S large subunit contains a 16S rRNA (16S mt-rRNA), a copy of mitochondrial valine transfer RNA (mt-tRNA(Val)), which plays an integral structural role, and 52 different proteins. mL52 connects the central protuberance to the body of the ribosome.

It localises to the mitochondrion. In Homo sapiens (Human), this protein is Large ribosomal subunit protein mL52 (MRPL52).